The primary structure comprises 180 residues: Shikimate kinase (180 aa).

14–19 (GAGKSC) contributes to the ATP binding site. Ser18 serves as a coordination point for Mg(2+). Asp36, Arg60, and Gly82 together coordinate substrate. Residue Arg120 participates in ATP binding. Arg139 contacts substrate.

This sequence belongs to the shikimate kinase family. Monomer. Mg(2+) is required as a cofactor.

Its subcellular location is the cytoplasm. The catalysed reaction is shikimate + ATP = 3-phosphoshikimate + ADP + H(+). Its pathway is metabolic intermediate biosynthesis; chorismate biosynthesis; chorismate from D-erythrose 4-phosphate and phosphoenolpyruvate: step 5/7. Its function is as follows. Catalyzes the specific phosphorylation of the 3-hydroxyl group of shikimic acid using ATP as a cosubstrate. In Xanthomonas euvesicatoria pv. vesicatoria (strain 85-10) (Xanthomonas campestris pv. vesicatoria), this protein is Shikimate kinase.